The following is a 401-amino-acid chain: Phosphoglycerate kinase (401 aa).

Residues 24–26, Arg-40, 63–66, Arg-122, and Arg-155 each bind substrate; these read DFN and HFGR. ATP-binding positions include Lys-206, Gly-297, Glu-328, and 357–360; that span reads GGDS.

Belongs to the phosphoglycerate kinase family. In terms of assembly, monomer.

The protein resides in the cytoplasm. It carries out the reaction (2R)-3-phosphoglycerate + ATP = (2R)-3-phospho-glyceroyl phosphate + ADP. Its pathway is carbohydrate degradation; glycolysis; pyruvate from D-glyceraldehyde 3-phosphate: step 2/5. This is Phosphoglycerate kinase from Synechococcus sp. (strain CC9605).